The chain runs to 166 residues: UPF0304 protein VV1_2093 (166 aa).

This sequence belongs to the UPF0304 family.

This Vibrio vulnificus (strain CMCP6) protein is UPF0304 protein VV1_2093.